Consider the following 315-residue polypeptide: ATP synthase gamma chain (315 aa).

It belongs to the ATPase gamma chain family. As to quaternary structure, F-type ATPases have 2 components, CF(1) - the catalytic core - and CF(0) - the membrane proton channel. CF(1) has five subunits: alpha(3), beta(3), gamma(1), delta(1), epsilon(1). CF(0) has three main subunits: a, b and c.

Its subcellular location is the cellular thylakoid membrane. Its function is as follows. Produces ATP from ADP in the presence of a proton gradient across the membrane. The gamma chain is believed to be important in regulating ATPase activity and the flow of protons through the CF(0) complex. The chain is ATP synthase gamma chain from Synechococcus sp. (strain RCC307).